The following is a 141-amino-acid chain: Small ribosomal subunit protein bS16 (141 aa).

Polar residues-rich tracts occupy residues 89 to 101 and 109 to 129; these read NVSV…TEAI and ATAN…TATI. A disordered region spans residues 89–141; it reads NVSVSHAESTEAITNAEPIQATANTESNEVSDSESTATATIRESEEQPPISES.

Belongs to the bacterial ribosomal protein bS16 family.

This is Small ribosomal subunit protein bS16 from Trichodesmium erythraeum (strain IMS101).